Reading from the N-terminus, the 474-residue chain is Bifunctional protein HldE (474 aa).

The segment at 1–321 (MILSSSLRPT…EYLHSSHQGE (321 aa)) is ribokinase. 198–201 (NKKE) serves as a coordination point for ATP. Residue Asp266 is part of the active site. The tract at residues 348 to 474 (FTNGCFDILH…SAVVKKIQGS (127 aa)) is cytidylyltransferase.

The protein in the N-terminal section; belongs to the carbohydrate kinase PfkB family. In the C-terminal section; belongs to the cytidylyltransferase family. In terms of assembly, homodimer.

The enzyme catalyses D-glycero-beta-D-manno-heptose 7-phosphate + ATP = D-glycero-beta-D-manno-heptose 1,7-bisphosphate + ADP + H(+). The catalysed reaction is D-glycero-beta-D-manno-heptose 1-phosphate + ATP + H(+) = ADP-D-glycero-beta-D-manno-heptose + diphosphate. Its pathway is nucleotide-sugar biosynthesis; ADP-L-glycero-beta-D-manno-heptose biosynthesis; ADP-L-glycero-beta-D-manno-heptose from D-glycero-beta-D-manno-heptose 7-phosphate: step 1/4. It functions in the pathway nucleotide-sugar biosynthesis; ADP-L-glycero-beta-D-manno-heptose biosynthesis; ADP-L-glycero-beta-D-manno-heptose from D-glycero-beta-D-manno-heptose 7-phosphate: step 3/4. Its function is as follows. Catalyzes the phosphorylation of D-glycero-D-manno-heptose 7-phosphate at the C-1 position to selectively form D-glycero-beta-D-manno-heptose-1,7-bisphosphate. Catalyzes the ADP transfer from ATP to D-glycero-beta-D-manno-heptose 1-phosphate, yielding ADP-D-glycero-beta-D-manno-heptose. This chain is Bifunctional protein HldE, found in Wolinella succinogenes (strain ATCC 29543 / DSM 1740 / CCUG 13145 / JCM 31913 / LMG 7466 / NCTC 11488 / FDC 602W) (Vibrio succinogenes).